Reading from the N-terminus, the 382-residue chain is Flap endonuclease 1 (382 aa).

The N-domain stretch occupies residues 1–105 (MGIKGLNAII…HELTKRSSRR (105 aa)). Mg(2+) is bound at residue Asp-34. DNA-binding residues include Arg-47 and Arg-71. Residues Asp-87, Glu-156, Glu-158, Asp-177, and Asp-179 each coordinate Mg(2+). An I-domain region spans residues 120-251 (EKMKQERRLV…VTALKLIKTH (132 aa)). Residue Glu-156 coordinates DNA. Positions 229 and 231 each coordinate DNA. Asp-231 contributes to the Mg(2+) binding site. The segment at 339–347 (IQGRLDGFF) is interaction with PCNA. A disordered region spans residues 358–382 (AAAAKRAQENKKLNKNKNKVTKGRR). Positions 370–382 (LNKNKNKVTKGRR) are enriched in basic residues.

Belongs to the XPG/RAD2 endonuclease family. FEN1 subfamily. In terms of assembly, interacts with PCNA. Three molecules of RAD27 bind to one PCNA trimer with each molecule binding to one PCNA monomer. PCNA stimulates the nuclease activity without altering cleavage specificity. It depends on Mg(2+) as a cofactor. Phosphorylated. Phosphorylation upon DNA damage induces relocalization to the nuclear plasma.

Its subcellular location is the nucleus. It localises to the nucleolus. The protein resides in the nucleoplasm. The protein localises to the mitochondrion. Structure-specific nuclease with 5'-flap endonuclease and 5'-3' exonuclease activities involved in DNA replication and repair. During DNA replication, cleaves the 5'-overhanging flap structure that is generated by displacement synthesis when DNA polymerase encounters the 5'-end of a downstream Okazaki fragment. It enters the flap from the 5'-end and then tracks to cleave the flap base, leaving a nick for ligation. Also involved in the long patch base excision repair (LP-BER) pathway, by cleaving within the apurinic/apyrimidinic (AP) site-terminated flap. Acts as a genome stabilization factor that prevents flaps from equilibrating into structures that lead to duplications and deletions. Also possesses 5'-3' exonuclease activity on nicked or gapped double-stranded DNA, and exhibits RNase H activity. Also involved in replication and repair of rDNA and in repairing mitochondrial DNA. This Saccharomyces cerevisiae (strain RM11-1a) (Baker's yeast) protein is Flap endonuclease 1.